The primary structure comprises 154 residues: Probable ubiquitin-conjugating enzyme E2 31 (154 aa).

In terms of domain architecture, UBC core spans 8-153 (KAAQRIAMEY…AREFTARHAN (146 aa)). C91 (glycyl thioester intermediate) is an active-site residue.

Belongs to the ubiquitin-conjugating enzyme family.

The catalysed reaction is S-ubiquitinyl-[E1 ubiquitin-activating enzyme]-L-cysteine + [E2 ubiquitin-conjugating enzyme]-L-cysteine = [E1 ubiquitin-activating enzyme]-L-cysteine + S-ubiquitinyl-[E2 ubiquitin-conjugating enzyme]-L-cysteine.. It participates in protein modification; protein ubiquitination. Accepts the ubiquitin from the E1 complex and catalyzes its covalent attachment to other proteins. The polypeptide is Probable ubiquitin-conjugating enzyme E2 31 (UBC31) (Arabidopsis thaliana (Mouse-ear cress)).